The sequence spans 393 residues: Arginine biosynthesis bifunctional protein ArgJ 3 (393 aa).

Substrate is bound by residues threonine 148, lysine 170, threonine 181, glutamate 260, asparagine 388, and threonine 393. Residue threonine 181 is the Nucleophile of the active site.

Belongs to the ArgJ family. As to quaternary structure, heterotetramer of two alpha and two beta chains.

It is found in the cytoplasm. It carries out the reaction N(2)-acetyl-L-ornithine + L-glutamate = N-acetyl-L-glutamate + L-ornithine. The enzyme catalyses L-glutamate + acetyl-CoA = N-acetyl-L-glutamate + CoA + H(+). It functions in the pathway amino-acid biosynthesis; L-arginine biosynthesis; L-ornithine and N-acetyl-L-glutamate from L-glutamate and N(2)-acetyl-L-ornithine (cyclic): step 1/1. The protein operates within amino-acid biosynthesis; L-arginine biosynthesis; N(2)-acetyl-L-ornithine from L-glutamate: step 1/4. In terms of biological role, catalyzes two activities which are involved in the cyclic version of arginine biosynthesis: the synthesis of N-acetylglutamate from glutamate and acetyl-CoA as the acetyl donor, and of ornithine by transacetylation between N(2)-acetylornithine and glutamate. In Streptomyces clavuligerus, this protein is Arginine biosynthesis bifunctional protein ArgJ 3.